The primary structure comprises 526 residues: Rho guanine nucleotide exchange factor 3 (526 aa).

The disordered stretch occupies residues Glu20–Lys40. Phosphoserine is present on residues Ser47 and Ser70. Residues Lys122 to Lys304 enclose the DH domain. In terms of domain architecture, PH spans Ile291–Glu449. Disordered stretches follow at residues Glu464–Val502 and Glu507–Val526. Residues Ser466–Arg475 are compositionally biased toward polar residues.

Interacts with RHOA and RHOB.

The protein resides in the cytoplasm. In terms of biological role, acts as a guanine nucleotide exchange factor (GEF) for RhoA and RhoB GTPases. The chain is Rho guanine nucleotide exchange factor 3 (ARHGEF3) from Macaca fascicularis (Crab-eating macaque).